Reading from the N-terminus, the 296-residue chain is NAD kinase (296 aa).

Asp-78 functions as the Proton acceptor in the catalytic mechanism. Residues 78–79, 152–153, Arg-180, Asp-182, and Gln-251 contribute to the NAD(+) site; these read DG and ND.

The protein belongs to the NAD kinase family. Requires a divalent metal cation as cofactor.

Its subcellular location is the cytoplasm. The catalysed reaction is NAD(+) + ATP = ADP + NADP(+) + H(+). Involved in the regulation of the intracellular balance of NAD and NADP, and is a key enzyme in the biosynthesis of NADP. Catalyzes specifically the phosphorylation on 2'-hydroxyl of the adenosine moiety of NAD to yield NADP. In Neisseria meningitidis serogroup C (strain 053442), this protein is NAD kinase.